The following is a 398-amino-acid chain: MSERKLFTSESVSEGHPDKIADQISDAILDAILEQDPDAHVAAETAVYTGSVHVFGEISTTAYVDINRVVRNTIAEIGYDKAEYGFSAESVGVHPSLVEQSPDIAQGVNEALEVRGSLEQDPLDLIGAGDQGLMFGFAVDETPELMPLPISLAHQLVKKLTDLRKSGELTYLRPDAKSQVTVEYDENNQPIRVDAVVISTQHDPNVTNDQLHKDVIEKVINEVIPSHYLDDQTKFFINPTGRFVIGGPQGDSGLTGRKIIVDTYGGYSRHGGGAFSGKDATKVDRSASYAARYIAKNIVAADLAKKVEVQLAYAIGVAQPVSVRVDTFGTGVIAEADLEAAVRQIFDLRPAGIINMLDLKRPIYRQTAAYGHMGRTDIDLPWERVDKVQALKDFIASK.

An ATP-binding site is contributed by His-16. Asp-18 lines the Mg(2+) pocket. Glu-44 provides a ligand contact to K(+). The L-methionine site is built by Glu-57 and Gln-100. Residues 100-110 (QSPDIAQGVNE) form a flexible loop region. ATP-binding positions include 175-177 (DAK), 242-243 (RF), Asp-251, 257-258 (RK), Ala-274, and Lys-278. Residue Asp-251 participates in L-methionine binding. Lys-282 is a binding site for L-methionine.

The protein belongs to the AdoMet synthase family. Homotetramer; dimer of dimers. Requires Mg(2+) as cofactor. K(+) serves as cofactor.

Its subcellular location is the cytoplasm. It catalyses the reaction L-methionine + ATP + H2O = S-adenosyl-L-methionine + phosphate + diphosphate. The protein operates within amino-acid biosynthesis; S-adenosyl-L-methionine biosynthesis; S-adenosyl-L-methionine from L-methionine: step 1/1. In terms of biological role, catalyzes the formation of S-adenosylmethionine (AdoMet) from methionine and ATP. The overall synthetic reaction is composed of two sequential steps, AdoMet formation and the subsequent tripolyphosphate hydrolysis which occurs prior to release of AdoMet from the enzyme. The sequence is that of S-adenosylmethionine synthase from Streptococcus agalactiae serotype III (strain NEM316).